Here is an 857-residue protein sequence, read N- to C-terminus: Protein ARG5,6, mitochondrial (857 aa).

Residues 341–492 form the N-acetyltransferase domain; it reads INRNSLRDFG…FDSSSIGSSL (152 aa). A disordered region spans residues 509-532; the sequence is GFHHSTVRRNTNPNPPLSEGKQTE. The active site involves C669.

In the N-terminal section; belongs to the acetylglutamate kinase family. It in the C-terminal section; belongs to the NAGSA dehydrogenase family.

Its subcellular location is the mitochondrion. It catalyses the reaction N-acetyl-L-glutamate 5-semialdehyde + phosphate + NADP(+) = N-acetyl-L-glutamyl 5-phosphate + NADPH + H(+). It carries out the reaction N-acetyl-L-glutamate + ATP = N-acetyl-L-glutamyl 5-phosphate + ADP. It participates in amino-acid biosynthesis; L-arginine biosynthesis; N(2)-acetyl-L-ornithine from L-glutamate: step 2/4. It functions in the pathway amino-acid biosynthesis; L-arginine biosynthesis; N(2)-acetyl-L-ornithine from L-glutamate: step 3/4. The protein is Protein ARG5,6, mitochondrial (ARG5,6) of Candida albicans (Yeast).